Reading from the N-terminus, the 72-residue chain is Translation initiation factor IF-1 (72 aa).

The 72-residue stretch at 1–72 folds into the S1-like domain; it reads MAKEDVIEFS…TKGRITFRYK (72 aa).

It belongs to the IF-1 family. Component of the 30S ribosomal translation pre-initiation complex which assembles on the 30S ribosome in the order IF-2 and IF-3, IF-1 and N-formylmethionyl-tRNA(fMet); mRNA recruitment can occur at any time during PIC assembly.

The protein resides in the cytoplasm. In terms of biological role, one of the essential components for the initiation of protein synthesis. Stabilizes the binding of IF-2 and IF-3 on the 30S subunit to which N-formylmethionyl-tRNA(fMet) subsequently binds. Helps modulate mRNA selection, yielding the 30S pre-initiation complex (PIC). Upon addition of the 50S ribosomal subunit IF-1, IF-2 and IF-3 are released leaving the mature 70S translation initiation complex. This is Translation initiation factor IF-1 from Paramagnetospirillum magneticum (strain ATCC 700264 / AMB-1) (Magnetospirillum magneticum).